A 214-amino-acid chain; its full sequence is Large ribosomal subunit protein uL4 (214 aa).

The interval 43–83 is disordered; it reads RRQAGTHKAKSRSEVNRTTKKSIKQKGSGGARHGSRNAPIF.

The protein belongs to the universal ribosomal protein uL4 family. As to quaternary structure, part of the 50S ribosomal subunit.

One of the primary rRNA binding proteins, this protein initially binds near the 5'-end of the 23S rRNA. It is important during the early stages of 50S assembly. It makes multiple contacts with different domains of the 23S rRNA in the assembled 50S subunit and ribosome. Functionally, forms part of the polypeptide exit tunnel. This Hyphomonas neptunium (strain ATCC 15444) protein is Large ribosomal subunit protein uL4.